A 291-amino-acid chain; its full sequence is Small ribosomal subunit biogenesis GTPase RsgA 2 (291 aa).

Residues 63–221 enclose the CP-type G domain; the sequence is ENALVRPPVA…VADTPGFSSI (159 aa). GTP contacts are provided by residues 112 to 115 and 164 to 172; these read SKMD and GQSGVGKST. Positions 245, 250, 252, and 258 each coordinate Zn(2+).

It belongs to the TRAFAC class YlqF/YawG GTPase family. RsgA subfamily. Monomer. Associates with 30S ribosomal subunit, binds 16S rRNA. Zn(2+) is required as a cofactor.

The protein resides in the cytoplasm. One of several proteins that assist in the late maturation steps of the functional core of the 30S ribosomal subunit. Helps release RbfA from mature subunits. May play a role in the assembly of ribosomal proteins into the subunit. Circularly permuted GTPase that catalyzes slow GTP hydrolysis, GTPase activity is stimulated by the 30S ribosomal subunit. The polypeptide is Small ribosomal subunit biogenesis GTPase RsgA 2 (Listeria monocytogenes serovar 1/2a (strain ATCC BAA-679 / EGD-e)).